The sequence spans 504 residues: Argininosuccinate lyase 2 (504 aa).

The protein belongs to the lyase 1 family. Argininosuccinate lyase subfamily.

The protein localises to the cytoplasm. The catalysed reaction is 2-(N(omega)-L-arginino)succinate = fumarate + L-arginine. Its pathway is amino-acid biosynthesis; L-arginine biosynthesis; L-arginine from L-ornithine and carbamoyl phosphate: step 3/3. The sequence is that of Argininosuccinate lyase 2 from Agrobacterium fabrum (strain C58 / ATCC 33970) (Agrobacterium tumefaciens (strain C58)).